We begin with the raw amino-acid sequence, 529 residues long: Probable anion transporter 1, chloroplastic (529 aa).

Residues 1 to 55 (MLYLLPLSVSCRVPGSPPAPRSRRFLDPGGGRGVGDGLGGVRVFRRRALRGTDVR) constitute a chloroplast transit peptide. Disordered stretches follow at residues 13–39 (VPGSPPAPRSRRFLDPGGGRGVGDGLG) and 52–78 (TDVRSNTSSSSSRKGRHDDARHDGGYG). Positions 28 to 39 (PGGGRGVGDGLG) are enriched in gly residues. Residues 67–76 (RHDDARHDGG) show a composition bias toward basic and acidic residues. 11 helical membrane passes run 120 to 140 (WAIVFLCFSAFLLCNMDRVNM), 158 to 178 (VGLIQSSFFWGYLLTQIAGGI), 187 to 207 (TVLGFGVIWWSIATALTPFAA), 209 to 229 (LGLPFLLVTRAFMGVGEGVAM), 251 to 271 (LVYSGMYLGSVTGLAFSPLLI), 274 to 294 (FGWPSVFYSFGSLGVFWFSTW), 340 to 360 (VWALIVSHFCHNWGTFILLTW), 378 to 398 (LFCVLPWLTMAVSANFGGWIA), 418 to 438 (IGFLGPAFFLTQLSHIDSPAM), 469 to 489 (AGVLLGLSNTAGVLAGVFGTA), and 503 to 523 (VFKVSVVLYLVGTLVWNLFST).

This sequence belongs to the major facilitator superfamily. Sodium/anion cotransporter (TC 2.A.1.14) family.

The protein localises to the plastid. It localises to the chloroplast membrane. In terms of biological role, probable anion transporter. The protein is Probable anion transporter 1, chloroplastic (PHT4;1) of Oryza sativa subsp. japonica (Rice).